The primary structure comprises 288 residues: MKQIKKAIIPAAGLGTRFLPATKAMPKEMLPILDKPTIQYIVEEASRAGIEDIIIVTGKHKRAIEDHFDNQKELEMVLEEKGKDDLLEKVQYSTDLANIFYVRQKEQKGLGHAIHTARQFIGNEPFAVLLGDDIVESETPAIKQLMNVYEETGHSVIGVQEVPESVTHRYGIIDPLEKEGRRYEVKQFVEKPKQGTAPSNLAIMGRYILTPEIFDYLETQKEGAGNEIQLTDAIERMNSDIPVYAYDFDGDRYDVGEKLGFVKTTIEYALKDPKMKDELIKFIKELGF.

This sequence belongs to the UDPGP type 2 family.

The catalysed reaction is alpha-D-glucose 1-phosphate + UTP + H(+) = UDP-alpha-D-glucose + diphosphate. The protein operates within glycolipid metabolism; diglucosyl-diacylglycerol biosynthesis. In terms of biological role, catalyzes the formation of UDP-glucose from glucose-1-phosphate and UTP. This is an intermediate step in the biosynthesis of diglucosyl-diacylglycerol (Glc2-DAG), i.e. a glycolipid found in the membrane, which is also used as a membrane anchor for lipoteichoic acid (LTA). This chain is UTP--glucose-1-phosphate uridylyltransferase (gtaB), found in Staphylococcus haemolyticus (strain JCSC1435).